The primary structure comprises 179 residues: Disulfide bond formation protein B (179 aa).

Residues 1–14 are Cytoplasmic-facing; that stretch reads MLSYFKELSLRRPA. Residues 15-31 traverse the membrane as a helical segment; the sequence is WLLLATLACTLEVTGLY. The Periplasmic segment spans residues 32-49; sequence FQHKLGLIPCVMCIYERV. Cys41 and Cys44 are oxidised to a cystine. A helical membrane pass occupies residues 50 to 65; sequence ALTGLLIAGLIALIAP. The Cytoplasmic segment spans residues 66 to 72; the sequence is NFFLFRW. A helical transmembrane segment spans residues 73-90; sequence LALVLWGFSAFKGLSLSI. The Periplasmic portion of the chain corresponds to 91 to 146; sequence KHYDYQANPSPWNQCEFKPQFPQTIPLDEWFPNIFAAGTVNCSEKQWQMLGWGMPE. An intrachain disulfide couples Cys105 to Cys132. A helical transmembrane segment spans residues 147–165; that stretch reads WLIVAFSLFMLFFLIVFMS. Residues 166–179 lie on the Cytoplasmic side of the membrane; it reads QFKRAKPQYRSVFR.

Belongs to the DsbB family.

The protein localises to the cell inner membrane. Required for disulfide bond formation in some periplasmic proteins. Acts by oxidizing the DsbA protein. The polypeptide is Disulfide bond formation protein B (Haemophilus ducreyi (strain 35000HP / ATCC 700724)).